We begin with the raw amino-acid sequence, 541 residues long: Cytochrome P450 monooxygenase claW (541 aa).

A helical transmembrane segment spans residues 12–32 (VINALVILFSFWAFLSLIRVI). Cys480 serves as a coordination point for heme.

This sequence belongs to the cytochrome P450 family. Heme serves as cofactor.

Its subcellular location is the membrane. It participates in secondary metabolite biosynthesis; terpenoid biosynthesis. Its function is as follows. Cytochrome P450 monooxygenase; part of the gene cluster that mediates the biosynthesis of clavilactone A, a meroterpenoid that features a unique benzo-fused ten-membered carbocyclic ring unit with an alpha,beta-epoxy-gamma-lactone moiety, forming an intriguing 10/5/3 tricyclic nested skeleton. Cytochrome P450 monooxygenases claO, claP, claQ, claU, and claW are close orthologs, suggesting that a redundant function or pseudogenes are present in the cla cluster. These monoxygenases are not involved in clavilactone A biosynthesis nor its modification. ClaR, ClaS and ClaT are sufficient to produce clavilactone A. The biosynthesis begins with the prenyltransferase claS that transfers geranyl pyrophosphate (GPP) to hydroquinone to produces geranylhydroquinone. The cytochrome P450 monooxygenase claR then catalyzes the diradical coupling reaction between the intramolecular hydroquinone and allyl moieties to form the benzo-fused ten-membered carbocyclic ring unit of wigantol. Finally the cytochrome P450 monooxygenase claT exquisitely and stereoselectively assembles the alpha,beta-epoxy-gamma-lactone moiety, producing clavilactone A via arnebinol A. This is Cytochrome P450 monooxygenase claW from Ampulloclitocybe clavipes (Club foot).